Here is a 1083-residue protein sequence, read N- to C-terminus: Chitin synthase 2 (1083 aa).

2 stretches are compositionally biased toward basic and acidic residues: residues 1-10 and 18-30; these read MSSEREERTF and DDVR…ENQE. 2 disordered regions span residues 1-248 and 260-294; these read MSSE…IADD and DDDV…TLNE. A glycan (N-linked (GlcNAc...) asparagine) is linked at Asn23. Polar residues-rich tracts occupy residues 38 to 49 and 61 to 70; these read SYASSMAESQTL and AKLQNKNRTS. Asn67 carries N-linked (GlcNAc...) asparagine glycosylation. 2 stretches are compositionally biased toward basic and acidic residues: residues 78-100 and 117-128; these read LPRD…KEQQ and RLRDVNSHDKLP. 3 stretches are compositionally biased toward polar residues: residues 132–148, 177–191, and 282–292; these read SPRN…SRSG, RPWT…FTRS, and SYMSSESQDTL. N-linked (GlcNAc...) asparagine glycosylation occurs at Asn417. Helical transmembrane passes span 708–728, 747–767, 785–805, 820–840, 860–880, 889–909, 987–1007, and 1020–1040; these read WLNG…QIWF, FIQL…FYFV, TVIF…QFIL, ISMI…FYII, NMIV…ILYL, SAQY…YAFC, YLVL…SEIY, and FLLW…TTFA.

It belongs to the chitin synthase family. Class II subfamily.

It is found in the cell membrane. It carries out the reaction [(1-&gt;4)-N-acetyl-beta-D-glucosaminyl](n) + UDP-N-acetyl-alpha-D-glucosamine = [(1-&gt;4)-N-acetyl-beta-D-glucosaminyl](n+1) + UDP + H(+). Its function is as follows. Polymerizes chitin, a structural polymer of the cell wall and septum, by transferring the sugar moiety of UDP-GlcNAc to the non-reducing end of the growing chitin polymer. Plays a critical role in cell wall integrity and virulence. The polypeptide is Chitin synthase 2 (Fusarium oxysporum f. sp. lycopersici (strain 4287 / CBS 123668 / FGSC 9935 / NRRL 34936) (Fusarium vascular wilt of tomato)).